Here is a 472-residue protein sequence, read N- to C-terminus: 3-isopropylmalate dehydratase large subunit (472 aa).

[4Fe-4S] cluster-binding residues include C347, C407, and C410.

The protein belongs to the aconitase/IPM isomerase family. LeuC type 1 subfamily. As to quaternary structure, heterodimer of LeuC and LeuD. It depends on [4Fe-4S] cluster as a cofactor.

The catalysed reaction is (2R,3S)-3-isopropylmalate = (2S)-2-isopropylmalate. Its pathway is amino-acid biosynthesis; L-leucine biosynthesis; L-leucine from 3-methyl-2-oxobutanoate: step 2/4. In terms of biological role, catalyzes the isomerization between 2-isopropylmalate and 3-isopropylmalate, via the formation of 2-isopropylmaleate. The polypeptide is 3-isopropylmalate dehydratase large subunit (Bacillus licheniformis (strain ATCC 14580 / DSM 13 / JCM 2505 / CCUG 7422 / NBRC 12200 / NCIMB 9375 / NCTC 10341 / NRRL NRS-1264 / Gibson 46)).